The sequence spans 637 residues: MAAMAVGGAGGSRVSSGRDLNCVPEIADTLGAVAKQGFDFLCMPVFHPRFKREFIQEPAKNRPGPQTRSDLLLSGRDWNTLIVGKLSPWIHPDSKVEKIRRNSEAAMLQELNFGAYLGLPAFLLPLNQEDNTNLARVLTNHIHTGHHSSMFWMRVPLVAPEDLRDDVIANAPTTHTEEYSGEEKTWMWWHNFRTLCDYSKRIAVALEIGADLPSNHVIDRWLGEPIKAAILPTSIFLTNKKGFPVLSKVQQRLIFRLLKLEVQFIITGTNHHSEKEFCSYLQYLEYLSQNRPPPNAYELFAKGYEDYLQSPLQPLMDNLESQTYEVFEKDPIKYSQYQQAIYKCLLDRVPEEEKETNVQVLMVLGAGRGPLVNASLRAAKQAERRIRLYAVEKNPNAVVTLENWQFEEWGSQVTVVSSDMREWVAPEKADIIVSELLGSFADNELSPECLDGAQHFLKDDGVSIPGEYTSFLAPISSSKLYNEVRACREKDRDPEAQFEMPYVVRLHNFHQLSAPKPCFTFSHPNRDPMIDNNRYCTLEFPVEVNTVLHGFAGYFETVLYRDITLSIRPETHSPGMFSWFPIFFPIKQPITVHEGQNICVRFWRCSNSKKVWYEWAVTAPVCSSIHNPTGRSYTIGL.

A2 bears the N-acetylalanine mark. Residues 13–292 (RVSSGRDLNC…YLEYLSQNRP (280 aa)) are TIM barrel. In terms of domain architecture, SAM-dependent MTase PRMT-type spans 308-615 (LQSPLQPLMD…SNSKKVWYEW (308 aa)). S-adenosyl-L-methionine is bound at residue Y324. F327 serves as a coordination point for a protein. S-adenosyl-L-methionine is bound by residues 333–334 (KY), E392, and 419–420 (DM). Residues E435 and E444 each coordinate a protein. Residues E435 and E444 each act as proton donor/acceptor in the active site. The segment at 465–637 (PGEYTSFLAP…PTGRSYTIGL (173 aa)) is beta barrel. The segment at 488–494 (REKDRDP) is dimerization.

This sequence belongs to the class I-like SAM-binding methyltransferase superfamily. Protein arginine N-methyltransferase family. Forms, at least, homodimers and homotetramers. Component of the methylosome complex, composed of PRMT5, WDR77 and CLNS1A. Found in a complex composed of PRMT5, WDR77 and RIOK1. RIOK1 and CLNS1A associate with PRMT5 in a mutually exclusive fashion, which allows the recruitment of distinct methylation substrates, such as nucleolin/NCL and Sm proteins, respectively. Interacts with PRDM1. Identified in a complex composed of methylosome and PRMT1 and ERH. Interacts with EGFR; methylates EGFR and stimulates EGFR-mediated ERK activation. Interacts with HOXA9. Interacts with SRGAP2. Found in a complex with COPRS, RUNX1 and CBFB. Interacts with CHTOP; the interaction symmetrically methylates CHTOP, but seems to require the presence of PRMT1. Interacts with EPB41L3; this modulates methylation of target proteins. Component of a high molecular weight E2F-pocket protein complex, CERC (cyclin E1 repressor complex). Associates with SWI/SNF remodeling complexes containing SMARCA2 and SMARCA4. Interacts with JAK2, SSTR1, SUPT5H, BRAF and with active RAF1. Interacts with LSM11, PRMT7 and SNRPD3. Interacts with COPRS; promoting its recruitment on histone H4. Interacts with CLNS1A/pICln. Identified in a complex with CLNS1A/pICln and Sm proteins. Interacts with RPS10. Interacts with WDR77. Interacts with IWS1. Interacts with CRY1. Interacts with POLR2A. Interacts with SMN1/SMN2. Interacts with LYAR; this interaction is direct. Interacts with TTC5/STRAP; this interaction is DNA damage-dependent and promotes PRMT5 interaction with p53/TP53. Interacts with p53/TP53 in response to DNA damage; the interaction is TTC5/STRAP dependent. Interacts with FAM47E; the interaction is direct, promotes PRMT5 localization to chromatin, and does not disrupt its association with WDR77 or STUB1. Interacts with TDRD6. Interacts with STUB1. Interacts with MBD2. Does not interact with MBD3.

It localises to the cytoplasm. It is found in the nucleus. The protein localises to the golgi apparatus. It carries out the reaction L-arginyl-[protein] + 2 S-adenosyl-L-methionine = N(omega),N(omega)'-dimethyl-L-arginyl-[protein] + 2 S-adenosyl-L-homocysteine + 2 H(+). Activity is increased by EGF, HGF, FGF1 or FGF2 treatments, and slightly decreased by NGF treatment. Functionally, arginine methyltransferase that can both catalyze the formation of omega-N monomethylarginine (MMA) and symmetrical dimethylarginine (sDMA), with a preference for the formation of MMA. Specifically mediates the symmetrical dimethylation of arginine residues in the small nuclear ribonucleoproteins Sm D1 (SNRPD1) and Sm D3 (SNRPD3); such methylation being required for the assembly and biogenesis of snRNP core particles. Methylates SUPT5H and may regulate its transcriptional elongation properties. May methylate the N-terminal region of MBD2. Mono- and dimethylates arginine residues of myelin basic protein (MBP) in vitro. May play a role in cytokine-activated transduction pathways. Negatively regulates cyclin E1 promoter activity and cellular proliferation. Methylates histone H2A and H4 'Arg-3' during germ cell development. Methylates histone H3 'Arg-8', which may repress transcription. Methylates the Piwi proteins (PIWIL1, PIWIL2 and PIWIL4), methylation of Piwi proteins being required for the interaction with Tudor domain-containing proteins and subsequent localization to the meiotic nuage. Methylates RPS10. Attenuates EGF signaling through the MAPK1/MAPK3 pathway acting at 2 levels. First, monomethylates EGFR; this enhances EGFR 'Tyr-1197' phosphorylation and PTPN6 recruitment, eventually leading to reduced SOS1 phosphorylation. Second, methylates RAF1 and probably BRAF, hence destabilizing these 2 signaling proteins and reducing their catalytic activity. Required for induction of E-selectin and VCAM-1, on the endothelial cells surface at sites of inflammation. Methylates HOXA9. Methylates and regulates SRGAP2 which is involved in cell migration and differentiation. Acts as a transcriptional corepressor in CRY1-mediated repression of the core circadian component PER1 by regulating the H4R3 dimethylation at the PER1 promoter. Methylates GM130/GOLGA2, regulating Golgi ribbon formation. Methylates H4R3 in genes involved in glioblastomagenesis in a CHTOP- and/or TET1-dependent manner. Symmetrically methylates POLR2A, a modification that allows the recruitment to POLR2A of proteins including SMN1/SMN2 and SETX. This is required for resolving RNA-DNA hybrids created by RNA polymerase II, that form R-loop in transcription terminal regions, an important step in proper transcription termination. Along with LYAR, binds the promoter of gamma-globin HBG1/HBG2 and represses its expression. Symmetrically methylates NCL. Methylates p53/TP53; methylation might possibly affect p53/TP53 target gene specificity. Involved in spliceosome maturation and mRNA splicing in prophase I spermatocytes through the catalysis of the symmetrical arginine dimethylation of SNRPB (small nuclear ribonucleoprotein-associated protein) and the interaction with tudor domain-containing protein TDRD6. The chain is Protein arginine N-methyltransferase 5 (Prmt5) from Mus musculus (Mouse).